Consider the following 113-residue polypeptide: ATP-dependent Clp protease adapter protein ClpS (113 aa).

The span at 1-11 (MHRDLHMMSDR) shows a compositional bias: basic and acidic residues. The interval 1–25 (MHRDLHMMSDRSEDDGDTSILTATK) is disordered.

The protein belongs to the ClpS family. As to quaternary structure, binds to the N-terminal domain of the chaperone ClpA.

Its function is as follows. Involved in the modulation of the specificity of the ClpAP-mediated ATP-dependent protein degradation. The protein is ATP-dependent Clp protease adapter protein ClpS of Roseobacter denitrificans (strain ATCC 33942 / OCh 114) (Erythrobacter sp. (strain OCh 114)).